The primary structure comprises 428 residues: Enolase (428 aa).

Position 163 (Gln163) interacts with (2R)-2-phosphoglycerate. Catalysis depends on Glu205, which acts as the Proton donor. Positions 242, 285, and 312 each coordinate Mg(2+). The (2R)-2-phosphoglycerate site is built by Lys337, Arg366, Ser367, and Lys388. Lys337 serves as the catalytic Proton acceptor.

Belongs to the enolase family. Requires Mg(2+) as cofactor.

The protein resides in the cytoplasm. The protein localises to the secreted. Its subcellular location is the cell surface. The catalysed reaction is (2R)-2-phosphoglycerate = phosphoenolpyruvate + H2O. The protein operates within carbohydrate degradation; glycolysis; pyruvate from D-glyceraldehyde 3-phosphate: step 4/5. Functionally, catalyzes the reversible conversion of 2-phosphoglycerate (2-PG) into phosphoenolpyruvate (PEP). It is essential for the degradation of carbohydrates via glycolysis. This is Enolase from Nitrosomonas eutropha (strain DSM 101675 / C91 / Nm57).